The following is a 380-amino-acid chain: O-phospho-L-seryl-tRNA:Cys-tRNA synthase (380 aa).

Residues 86–87 (AR), asparagine 192, and 215–217 (SGH) contribute to the pyridoxal 5'-phosphate site. Lysine 218 carries the N6-(pyridoxal phosphate)lysine modification.

It belongs to the SepCysS family. Homodimer. Interacts with SepRS. Requires pyridoxal 5'-phosphate as cofactor.

The catalysed reaction is O-phospho-L-seryl-tRNA(Cys) + hydrogen sulfide + H(+) = L-cysteinyl-tRNA(Cys) + phosphate. Its function is as follows. Converts O-phospho-L-seryl-tRNA(Cys) (Sep-tRNA(Cys)) to L-cysteinyl-tRNA(Cys) (Cys-tRNA(Cys)). The sequence is that of O-phospho-L-seryl-tRNA:Cys-tRNA synthase from Methanococcus maripaludis (strain DSM 14266 / JCM 13030 / NBRC 101832 / S2 / LL).